The following is a 325-amino-acid chain: DNA-directed RNA polymerase subunit alpha (325 aa).

The tract at residues 1 to 231 (MQTSLLKPKI…DQLSVFAALE (231 aa)) is alpha N-terminal domain (alpha-NTD). An alpha C-terminal domain (alpha-CTD) region spans residues 246–325 (IDPILLRPVD…ENWPPAGLDK (80 aa)).

The protein belongs to the RNA polymerase alpha chain family. As to quaternary structure, homodimer. The RNAP catalytic core consists of 2 alpha, 1 beta, 1 beta' and 1 omega subunit. When a sigma factor is associated with the core the holoenzyme is formed, which can initiate transcription.

It catalyses the reaction RNA(n) + a ribonucleoside 5'-triphosphate = RNA(n+1) + diphosphate. In terms of biological role, DNA-dependent RNA polymerase catalyzes the transcription of DNA into RNA using the four ribonucleoside triphosphates as substrates. This Burkholderia orbicola (strain MC0-3) protein is DNA-directed RNA polymerase subunit alpha.